A 157-amino-acid chain; its full sequence is Phosphopantetheine adenylyltransferase (157 aa).

Residue Ser8 coordinates substrate. ATP is bound by residues 8 to 9 (SF) and His16. The substrate site is built by Lys40, Thr72, and Arg86. ATP contacts are provided by residues 87–89 (GLR), Glu97, and 122–128 (FSFLSSS).

This sequence belongs to the bacterial CoaD family. As to quaternary structure, homohexamer. Requires Mg(2+) as cofactor.

It is found in the cytoplasm. The catalysed reaction is (R)-4'-phosphopantetheine + ATP + H(+) = 3'-dephospho-CoA + diphosphate. The protein operates within cofactor biosynthesis; coenzyme A biosynthesis; CoA from (R)-pantothenate: step 4/5. Functionally, reversibly transfers an adenylyl group from ATP to 4'-phosphopantetheine, yielding dephospho-CoA (dPCoA) and pyrophosphate. In Prochlorococcus marinus (strain MIT 9211), this protein is Phosphopantetheine adenylyltransferase.